The sequence spans 99 residues: MPKRKSPENTEDKDGSKVTKQEPTRRSARLSAKPAPPKPEPKPRKTSAKKEPGAKISRGAKGKKEEKQEAGKEGTAPSENGETKAEEAQKTESVDNEGE.

Basic and acidic residues-rich tracts occupy residues 1 to 25, 39 to 53, and 62 to 72; these read MPKR…EPTR, PEPK…KEPG, and GKKEEKQEAGK. The interval 1-99 is disordered; it reads MPKRKSPENT…KTESVDNEGE (99 aa). Position 6 is a phosphoserine (Ser-6). Thr-10 is subject to Phosphothreonine. Residues Ser-78 and Ser-93 each carry the phosphoserine modification. Residues 81 to 93 are compositionally biased toward basic and acidic residues; that stretch reads GETKAEEAQKTES.

The protein belongs to the HMGN family. In terms of assembly, interacts with the ligand binding domain of the thyroid receptor (TR) (in vitro). Requires the presence of thyroid hormone for its interaction. Interacts with transcriptional regulator SEHBP. Interacts with nucleosomes.

It is found in the nucleus. Its function is as follows. Binds to nucleosomes, regulating chromatin structure and consequently, chromatin-dependent processes such as transcription, DNA replication and DNA repair. Affects both insulin and glucagon levels and modulates the expression of pancreatic genes involved in insulin secretion. Regulates the expression of the glucose transporter SLC2A2 by binding specifically to its promoter region and recruiting PDX1 and additional transcription factors. Regulates the expression of SLC6A9, a glycine transporter which regulates the glycine concentration in synaptic junctions in the central nervous system, by binding to its transcription start site. May play a role in ocular development and astrocyte function. The sequence is that of High mobility group nucleosome-binding domain-containing protein 3 (HMGN3) from Pongo abelii (Sumatran orangutan).